The following is a 312-amino-acid chain: DNA-directed RNA polymerase subunit alpha (312 aa).

An alpha N-terminal domain (alpha-NTD) region spans residues methionine 1 to alanine 225. Positions lysine 243 to aspartate 312 are alpha C-terminal domain (alpha-CTD).

The protein belongs to the RNA polymerase alpha chain family. As to quaternary structure, homodimer. The RNAP catalytic core consists of 2 alpha, 1 beta, 1 beta' and 1 omega subunit. When a sigma factor is associated with the core the holoenzyme is formed, which can initiate transcription.

It catalyses the reaction RNA(n) + a ribonucleoside 5'-triphosphate = RNA(n+1) + diphosphate. Its function is as follows. DNA-dependent RNA polymerase catalyzes the transcription of DNA into RNA using the four ribonucleoside triphosphates as substrates. The protein is DNA-directed RNA polymerase subunit alpha of Lactobacillus helveticus (strain DPC 4571).